We begin with the raw amino-acid sequence, 306 residues long: MSQSDLDRQIAQLRNCENITEGEVKALCTKAREILVEESNVQRVDAPVTICGDIHGQFFDLMELFKVGGDCPDTNYLFLGDFVDRGFNSVETFLLLLALKVRYPDRITLIRGNHESRQITQVYGFYDECLRKYGSLNVWRYCTDIFDYLSLAAVIEEKIFCVHGGLSPSIKTMDDIRAIDRKQEVPHDGAMCDLMWSDPDEIEGWNLSPRGAGYLFGGDVVDDFNRKNNIELICRAHQLVMEGYRVMFNEQLVTVWSAPNYCYRCGNVASILELDENLAKSYKIFEAAPQENRGLPAKKPIPDYFL.

4 residues coordinate Mn(2+): D53, H55, D81, and N113. The active-site Proton donor is the H114. H163 and H237 together coordinate Mn(2+).

It belongs to the PPP phosphatase family. PP-4 (PP-X) subfamily. Requires Mn(2+) as cofactor.

The catalysed reaction is O-phospho-L-seryl-[protein] + H2O = L-seryl-[protein] + phosphate. The enzyme catalyses O-phospho-L-threonyl-[protein] + H2O = L-threonyl-[protein] + phosphate. The polypeptide is Serine/threonine-protein phosphatase PP-X homolog 4 (Ppx4) (Paramecium tetraurelia).